A 344-amino-acid chain; its full sequence is MKFVNHIEPVAPRRAGGAVAEVYAEARREFGRLPEPLAMLSPDEGLLTAGWATLRETLLVGQVPRGRKEAVAAAVAASLRCPWCVDAHTTMLYAAGQTDTAAAILAGTAPAAGDPNAPYVAWAAGTGTPAGPPAPFGPDVAAEYLGTAVQFHFIARLVLVLLDETFLPGGPRAQQLMRRAGGLVFARKVRAEHRPGRSTRRLEPRTLPDDLAWATPSEPIATAFAALSHHLDTAPHLPPPTRQVVRRVVGSWHGEPMPMSSRWTNEHTAELPADLHAPTRLALLTGLAPHQVTDDDVAAARSLLDTDAALVGALAWAAFTAARRIGTWIGAAAEGQVSRQNPTG.

Positions 49 to 50 are important for interaction with PknI; that stretch reads AG. Cys-84 (cysteine sulfenic acid (-SOH) intermediate) is an active-site residue.

The protein belongs to the AhpD family. As to quaternary structure, interacts with the serine/threonine-protein kinase PknI. The PknI-Rv2159c interaction is mediated through phosphorylation independent physical interaction.

Its activity is regulated as follows. Interaction with PknI increases the peroxidase activity by several folds. Functionally, involved in protection against oxidative stresses. May play a significant role in maintaining the cellular homeostasis during stress and virulence of M.tuberculosis. In vitro, catalyzes the decomposition of cumene hydroperoxide (CHP) to acetophenone. The protein is Alkyl hydroperoxide reductase Rv2159c of Mycobacterium tuberculosis (strain ATCC 25618 / H37Rv).